The following is a 349-amino-acid chain: MRKRISAIIMTLFMVLVSCNSGGVAEDPQSKFLKSVIDLGNDFLNVFTSFGDIVSKVLGFSTETKKSDVGAYFKTIQDTIQGTKDKLNKIVTDMKREGNPNASATETAVKTLIDNTLDKIIEGAKTVSDAIGDASDPIANVAAQNAAGAAGTEVDKLVKGIKTIVDVVLKGVGSANAGDDKKAEDGNTARTAAAGDGEAGKLFTAGAGAAGDANNAKKVAADAAKAVGAVTGADILQAMIKDNGDAAKLATAQNAGAAPKDGAIAGGIALRVMAKGGKFAGPSAAADDAVTAIKGAAISAITKALDTLTIAIRKTIDAGLKTVKEAMKINANDTPISPEQNTPKATTNN.

The N-terminal stretch at 1–18 is a signal peptide; the sequence is MRKRISAIIMTLFMVLVS. The N-palmitoyl cysteine moiety is linked to residue C19. A lipid anchor (S-diacylglycerol cysteine) is attached at C19.

It belongs to the variable large protein (Vlp) family. Gamma subfamily.

The protein localises to the cell outer membrane. Functionally, the Vlp and Vsp proteins are antigenically distinct proteins, only one vlp or vsp gene is transcriptionally active at any one time. Switching between these genes is a mechanism of host immune response evasion. The polypeptide is Variable large protein 19 (Borrelia hermsii).